The primary structure comprises 115 residues: MNPLIQSLTESQLRTDIPNFRPGDTVRVHAKVVEGNRERVQIFEGVVISRKGQGISEMYTVRKISSGVGVERTFPTHTPRVEKIEVTRHGKVRRAKLYYLRALQGKAARIKEVRQ.

Belongs to the bacterial ribosomal protein bL19 family.

This protein is located at the 30S-50S ribosomal subunit interface and may play a role in the structure and function of the aminoacyl-tRNA binding site. The chain is Large ribosomal subunit protein bL19 from Streptococcus mutans serotype c (strain ATCC 700610 / UA159).